A 611-amino-acid chain; its full sequence is MVLSRLPACLLPLVGTKVSIQGWLVATSRQVSKSISFHQLRDTHGTILQLLSTDKIILQQKREPLVSSTDFSQQKSTSVMRTLSSIPPESVVQVTGKLQRRPEHDRRPGNEFELHVEDVKLLNVAKNLQLFPGDEKPGMRIQLANRHIQLRAPKYNSYLRQRSRLAYQVHSFFNDREFCEVETPLLFKSTPEGAREFVVPSRLNPGKFYALPQSPQQYKQILMASGIGNYYQIARCFRDEDLRFDRQPEFTQIDLEMSFVDKPHEIMEVVEDLLVRLVSFAKGITLAKPFQHITYQHAIDKYGSDKPDIRFELPLKNITSLLPKQDPLISTEILVYNDLSHSLSNAESRKLCEAVGENVVVTSIREHSQLQTWVKKLPQLRQLPIVAEELNQKLQIGINSIVFMTNRPKYLVSGTTPLGKLRLLLHELLVKKKALPELDKDLLKFVWVVDFPLFSPTEEKNQSITSTHHPFTAPHWDDVHLLEKKPLSVRGLHYDIVVNGIELGGGSIRIHNPDIQRFVLKDVLKLPENRYATFEHLIRVLSSGCPPHGGIALGFDRLAALLTNAPGIREVIAFPKTSSGADLLIGSPSAIPEEMLKDYNVAITRQTQNRN.

A mitochondrion-targeting transit peptide spans 1 to 30 (MVLSRLPACLLPLVGTKVSIQGWLVATSRQ). Glu-192 lines the L-aspartate pocket. Positions 216 to 219 (QQYK) are aspartate. Position 238 (Arg-238) interacts with L-aspartate. ATP contacts are provided by residues 238 to 240 (RDE) and Glu-502. Arg-509 is an L-aspartate binding site. Residue 554–557 (GFDR) participates in ATP binding.

This sequence belongs to the class-II aminoacyl-tRNA synthetase family. Type 1 subfamily.

It is found in the mitochondrion. It catalyses the reaction tRNA(Asp) + L-aspartate + ATP = L-aspartyl-tRNA(Asp) + AMP + diphosphate. This chain is Aspartate--tRNA ligase, mitochondrial (msd1), found in Schizosaccharomyces pombe (strain 972 / ATCC 24843) (Fission yeast).